The following is a 497-amino-acid chain: Guanosine-5'-triphosphate,3'-diphosphate pyrophosphatase (497 aa).

Belongs to the GppA/Ppx family. GppA subfamily.

The catalysed reaction is guanosine 3'-diphosphate 5'-triphosphate + H2O = guanosine 3',5'-bis(diphosphate) + phosphate + H(+). The protein operates within purine metabolism; ppGpp biosynthesis; ppGpp from GTP: step 2/2. Functionally, catalyzes the conversion of pppGpp to ppGpp. Guanosine pentaphosphate (pppGpp) is a cytoplasmic signaling molecule which together with ppGpp controls the 'stringent response', an adaptive process that allows bacteria to respond to amino acid starvation, resulting in the coordinated regulation of numerous cellular activities. The polypeptide is Guanosine-5'-triphosphate,3'-diphosphate pyrophosphatase (Vibrio campbellii (strain ATCC BAA-1116)).